The sequence spans 200 residues: Transcription elongation factor A protein-like 3 (200 aa).

The tract at residues Met-1–Leu-200 is disordered. The segment covering Asp-20–Pro-36 has biased composition (acidic residues). The residue at position 30 (Ser-30) is a Phosphoserine. The span at Asp-37 to Asp-50 shows a compositional bias: basic and acidic residues. The segment covering Glu-51–Gly-64 has biased composition (acidic residues). Ser-65 bears the Phosphoserine mark. Composition is skewed to basic and acidic residues over residues Ser-65–Gly-80, Ala-96–Pro-107, and Asp-115–Arg-154.

The protein belongs to the TFS-II family. TFA subfamily.

It is found in the nucleus. In terms of biological role, may be involved in transcriptional regulation. This Homo sapiens (Human) protein is Transcription elongation factor A protein-like 3 (TCEAL3).